The chain runs to 1189 residues: Disabled homolog 2-interacting protein (1189 aa).

The interval 1–75 is disordered; that stretch reads MSAGGSARKS…EPSAATPFRV (75 aa). Residues 20 to 38 are compositionally biased toward basic residues; the sequence is LLRRPRLQRQRSRSRSRTR. The segment covering 39–49 has biased composition (basic and acidic residues); sequence PARESPQERPG. In terms of domain architecture, PH spans 101-202; that stretch reads SFRHILPGFR…WMENLRRAVH (102 aa). Positions 193–311 constitute a C2 domain; it reads WMENLRRAVH…AGRQFVEKWY (119 aa). The region spanning 387–595 is the Ras-GAP domain; sequence GKVKDFLTDL…TNMQRFLLEI (209 aa). The interval 646–943 is necessary for interaction with AKT1; that stretch reads LRDVHTALST…RTPPNLLSTL (298 aa). Residues 653–668 show a composition bias toward polar residues; that stretch reads LSTPGSGQLPGTNDLA. 2 disordered regions span residues 653–678 and 715–742; these read LSTPGSGQLPGTNDLASTPGSGSSSI and RSSGVQPSPARSSSYSEANEPDLQMANG. Residues 669–678 show a composition bias toward low complexity; it reads STPGSGSSSI. The span at 715-731 shows a compositional bias: polar residues; sequence RSSGVQPSPARSSSYSE. Phosphoserine; by MAP3K5 and RIPK1 is present on S728. Phosphoserine is present on S747. Disordered stretches follow at residues 803–823, 843–865, 895–998, 1015–1035, and 1164–1189; these read AGQTPTTPGTSEGAPGRPQLL, PRGLGDSGSEGHSSLSSHSNSEE, SLTE…SPNA, EDEGLGPDPPHRDRLRSKDEL, and RNGISPTNPTKLQITENGEFRNSSNC. The span at 852 to 865 shows a compositional bias: low complexity; it reads EGHSSLSSHSNSEE. The span at 919 to 931 shows a compositional bias: pro residues; it reads QPPPPPPPPPPAP. Composition is skewed to polar residues over residues 938–955 and 966–976; these read NLLSTLQYPRPSSGTLAS and RLRQQSSSSKG. Phosphoserine occurs at positions 978 and 995. The segment covering 1023–1035 has biased composition (basic and acidic residues); sequence PPHRDRLRSKDEL. Residues 1026–1159 adopt a coiled-coil conformation; that stretch reads RDRLRSKDEL…SALTQLKERY (134 aa).

In terms of assembly, on plasma membrane, exists in an inactive form complexed with TNFR1; in response to TNF-alpha, dissociates from TNFR1 complex, translocates to cytoplasm and forms part of an intracellular signaling complex comprising TRADD, RIPK1, TRAF2 and MAP3K5. Interacts with DAB1. Interacts (via NPXY motif) with DAB2 (via PID domain). Interacts (via PH domain) with ERN1. Part of a cytoplasmic complex made of HIPK1, DAB2IP and MAP3K5 in response to TNF-alpha; this complex formation promotes MAP3K5-JNK activation and subsequent apoptosis. Interacts (via N-terminal domain) with JAK2; the interaction occurs in a IFNG/IFN-gamma-dependent manner and inhibits JAK2 autophosphorylation activity. Interacts (via C2 domain) with GSK3B; the interaction stimulates GSK3B kinase activation. Interacts (via C2 domain) with PPP2CA. Interacts (via proline-rich motif) with a regulatory p85 subunit (via SH3 domain) of the PI3K complex; the interaction inhibits the PI3K-AKT complex activity in a TNF-alpha-dependent manner in prostate cancer (PCa) cells. Interacts with AKT1; the interaction is increased in a TNF-alpha-induced manner. Interacts (via C2 domain and active form preferentially) with KDR/VEGFR2 (tyrosine-phosphorylated active form preferentially); the interaction occurs at the late phase of VEGFA response and inhibits KDR/VEGFR2 activity. Interacts (via N-terminus C2 domain) with MAP3K5 ('Ser-966' dephosphorylated form preferentially); the interaction occurs in a TNF-alpha-induced manner. Interacts (via Ras-GAP domain) with the catalytic subunit of protein phosphatase PP2A; the interaction occurs in resting endothelial cells, is further enhanced by TNF-alpha stimulation and is required to bridge PP2A to MAP3K5. Interacts (via C-terminus PER domain) with TRAF2 (via zinc fingers); the interaction occurs in a TNF-alpha-dependent manner. Interacts with 14-3-3 proteins; the interaction occurs in a TNF-alpha-dependent manner. Interacts (via Ras-GAP domain) with RIPK1 (via kinase domain); the interaction occurs in a TNF-alpha-dependent manner. Interacts with RAB40C; acts as a GAP for RAB40C. In response to TNF-alpha-induction, phosphorylated at Ser-728; phosphorylation leads to a conformational change, and thus, increases its association with 14-3-3 proteins, MAP3K5, RIPK1 and TRAF2 in endothelial cells; also stimulates regulatory p85 subunit sequestring and PI3K-p85 complex activity inhibition. As to expression, expressed in endothelial and vascular smooth muscle cells (VSMCs). Expressed in prostate epithelial but poorly in prostate cancer cells. Poorly expressed in medulloblastoma cells compared to cerebellar precursor proliferating progenitor cells (at protein level). Low expression in prostate. Down-regulated in prostate cancer.

Its subcellular location is the cytoplasm. It is found in the cell membrane. The protein localises to the membrane. It localises to the cell projection. The protein resides in the dendrite. In terms of biological role, functions as a scaffold protein implicated in the regulation of a large spectrum of both general and specialized signaling pathways. Involved in several processes such as innate immune response, inflammation and cell growth inhibition, apoptosis, cell survival, angiogenesis, cell migration and maturation. Also plays a role in cell cycle checkpoint control; reduces G1 phase cyclin levels resulting in G0/G1 cell cycle arrest. Mediates signal transduction by receptor-mediated inflammatory signals, such as the tumor necrosis factor (TNF), interferon (IFN) or lipopolysaccharide (LPS). Modulates the balance between phosphatidylinositol 3-kinase (PI3K)-AKT-mediated cell survival and apoptosis stimulated kinase (MAP3K5)-JNK signaling pathways; sequesters both AKT1 and MAP3K5 and counterbalances the activity of each kinase by modulating their phosphorylation status in response to pro-inflammatory stimuli. Acts as a regulator of the endoplasmic reticulum (ER) unfolded protein response (UPR) pathway; specifically involved in transduction of the ER stress-response to the JNK cascade through ERN1. Mediates TNF-alpha-induced apoptosis activation by facilitating dissociation of inhibitor 14-3-3 from MAP3K5; recruits the PP2A phosphatase complex which dephosphorylates MAP3K5 on 'Ser-966', leading to the dissociation of 13-3-3 proteins and activation of the MAP3K5-JNK signaling pathway in endothelial cells. Also mediates TNF/TRAF2-induced MAP3K5-JNK activation, while it inhibits CHUK-NF-kappa-B signaling. Acts a negative regulator in the IFN-gamma-mediated JAK-STAT signaling cascade by inhibiting smooth muscle cell (VSMCs) proliferation and intimal expansion, and thus, prevents graft arteriosclerosis (GA). Acts as a GTPase-activating protein (GAP) for the ADP ribosylation factor 6 (ARF6), Ras and RAB40C. Promotes hydrolysis of the ARF6-bound GTP and thus, negatively regulates phosphatidylinositol 4,5-bisphosphate (PIP2)-dependent TLR4-TIRAP-MyD88 and NF-kappa-B signaling pathways in endothelial cells in response to lipopolysaccharides (LPS). Binds specifically to phosphatidylinositol 4-phosphate (PtdIns4P) and phosphatidylinositol 3-phosphate (PtdIns3P). In response to vascular endothelial growth factor (VEGFA), acts as a negative regulator of the VEGFR2-PI3K-mediated angiogenic signaling pathway by inhibiting endothelial cell migration and tube formation. In the developing brain, promotes both the transition from the multipolar to the bipolar stage and the radial migration of cortical neurons from the ventricular zone toward the superficial layer of the neocortex in a glial-dependent locomotion process. Probable downstream effector of the Reelin signaling pathway; promotes Purkinje cell (PC) dendrites development and formation of cerebellar synapses. Also functions as a tumor suppressor protein in prostate cancer progression; prevents cell proliferation and epithelial-to-mesenchymal transition (EMT) through activation of the glycogen synthase kinase-3 beta (GSK3B)-induced beta-catenin and inhibition of PI3K-AKT and Ras-MAPK survival downstream signaling cascades, respectively. This is Disabled homolog 2-interacting protein from Homo sapiens (Human).